The primary structure comprises 396 residues: Argininosuccinate synthase (396 aa).

Residues 10–18 and A37 contribute to the ATP site; that span reads AYSGGLDTS. Residues Y88 and S93 each contribute to the L-citrulline site. G118 contributes to the ATP binding site. L-aspartate contacts are provided by T120, N124, and D125. Position 124 (N124) interacts with L-citrulline. L-citrulline is bound by residues R128, S176, S185, E261, and Y273.

It belongs to the argininosuccinate synthase family. Type 1 subfamily. Homotetramer.

It is found in the cytoplasm. It carries out the reaction L-citrulline + L-aspartate + ATP = 2-(N(omega)-L-arginino)succinate + AMP + diphosphate + H(+). It functions in the pathway amino-acid biosynthesis; L-arginine biosynthesis; L-arginine from L-ornithine and carbamoyl phosphate: step 2/3. This Nitratidesulfovibrio vulgaris (strain ATCC 29579 / DSM 644 / CCUG 34227 / NCIMB 8303 / VKM B-1760 / Hildenborough) (Desulfovibrio vulgaris) protein is Argininosuccinate synthase.